The primary structure comprises 512 residues: Cytochrome P450 72A11 (512 aa).

A helical transmembrane segment spans residues 2 to 22; sequence EISVASVTVSVAVVVVSWWVW. Cysteine 460 provides a ligand contact to heme.

Belongs to the cytochrome P450 family. It depends on heme as a cofactor.

The protein resides in the membrane. The polypeptide is Cytochrome P450 72A11 (CYP72A11) (Arabidopsis thaliana (Mouse-ear cress)).